The primary structure comprises 617 residues: uncharacterized protein (617 aa).

The chain crosses the membrane as a helical span at residues 103–123; sequence AGVLLAKFFPLLFLYPLTYLA. The 410-residue stretch at 200–609 folds into the Protein kinase domain; that stretch reads FETREPVGSG…DILEAAKPFL (410 aa). ATP is bound by residues 206 to 214 and Lys302; that span reads VGSGCVAQV. Asp436 acts as the Proton acceptor in catalysis.

It belongs to the protein kinase superfamily. ADCK protein kinase family.

Its subcellular location is the mitochondrion. It is found in the membrane. Its function is as follows. The function of this protein is not yet clear. It is not known if it has protein kinase activity and what type of substrate it would phosphorylate (Ser, Thr or Tyr). Involved in the mitochondrial import of CoQ precursors, plays a role in muscle mitochondrial function and fatty acid beta-oxidation. This is an uncharacterized protein from Mus musculus (Mouse).